Consider the following 238-residue polypeptide: UDP-2,3-diacylglucosamine hydrolase (238 aa).

Mn(2+)-binding residues include Asp-8, His-10, Asp-41, Asn-78, and His-113. 78 to 79 (NR) serves as a coordination point for substrate. Positions 121, 159, 163, 166, and 194 each coordinate substrate. 2 residues coordinate Mn(2+): His-194 and His-196.

Belongs to the LpxH family. Mn(2+) serves as cofactor.

The protein localises to the cell inner membrane. It catalyses the reaction UDP-2-N,3-O-bis[(3R)-3-hydroxytetradecanoyl]-alpha-D-glucosamine + H2O = 2-N,3-O-bis[(3R)-3-hydroxytetradecanoyl]-alpha-D-glucosaminyl 1-phosphate + UMP + 2 H(+). It functions in the pathway glycolipid biosynthesis; lipid IV(A) biosynthesis; lipid IV(A) from (3R)-3-hydroxytetradecanoyl-[acyl-carrier-protein] and UDP-N-acetyl-alpha-D-glucosamine: step 4/6. In terms of biological role, hydrolyzes the pyrophosphate bond of UDP-2,3-diacylglucosamine to yield 2,3-diacylglucosamine 1-phosphate (lipid X) and UMP by catalyzing the attack of water at the alpha-P atom. Involved in the biosynthesis of lipid A, a phosphorylated glycolipid that anchors the lipopolysaccharide to the outer membrane of the cell. The polypeptide is UDP-2,3-diacylglucosamine hydrolase (Shewanella pealeana (strain ATCC 700345 / ANG-SQ1)).